The chain runs to 1236 residues: DNA-directed RNA polymerase subunit beta (1236 aa).

A disordered region spans residues 1185-1236 (IEGSEDYTEPKQPNDNYLEEEENKDKESDYDEDLNFDDLTKGLQLDDFNDEH). Acidic residues predominate over residues 1201 to 1220 (YLEEEENKDKESDYDEDLNF).

This sequence belongs to the RNA polymerase beta chain family. In terms of assembly, the RNAP catalytic core consists of 2 alpha, 1 beta, 1 beta' and 1 omega subunit. When a sigma factor is associated with the core the holoenzyme is formed, which can initiate transcription.

It carries out the reaction RNA(n) + a ribonucleoside 5'-triphosphate = RNA(n+1) + diphosphate. Functionally, DNA-dependent RNA polymerase catalyzes the transcription of DNA into RNA using the four ribonucleoside triphosphates as substrates. The chain is DNA-directed RNA polymerase subunit beta from Clostridium tetani (strain Massachusetts / E88).